The sequence spans 85 residues: U1-theraphotoxin-Hs1a (85 aa).

The N-terminal stretch at 1 to 22 is a signal peptide; sequence MKVTLIAILTCAAVLVLHTTAA. The propeptide occupies 23–48; the sequence is EELEAESQLMEVGMPDTELAAVDEER. Cystine bridges form between Cys52–Cys66, Cys56–Cys77, and Cys71–Cys82.

Heterodimer composed of the two variants Ile-58 and Gln-58. As to expression, expressed by the venom gland.

It localises to the secreted. Its function is as follows. Lethal neurotoxin that blocks neuromuscular transmission. Acts cooperatively to potentiate the activity of huwentoxin-I. This toxin is active against insects. The polypeptide is U1-theraphotoxin-Hs1a (Cyriopagopus schmidti (Chinese bird spider)).